The sequence spans 155 residues: S-ribosylhomocysteine lyase (155 aa).

Residues histidine 54, histidine 58, and cysteine 122 each contribute to the Fe cation site.

It belongs to the LuxS family. In terms of assembly, homodimer. Fe cation is required as a cofactor.

It carries out the reaction S-(5-deoxy-D-ribos-5-yl)-L-homocysteine = (S)-4,5-dihydroxypentane-2,3-dione + L-homocysteine. Functionally, involved in the synthesis of autoinducer 2 (AI-2) which is secreted by bacteria and is used to communicate both the cell density and the metabolic potential of the environment. The regulation of gene expression in response to changes in cell density is called quorum sensing. Catalyzes the transformation of S-ribosylhomocysteine (RHC) to homocysteine (HC) and 4,5-dihydroxy-2,3-pentadione (DPD). The polypeptide is S-ribosylhomocysteine lyase (Deinococcus deserti (strain DSM 17065 / CIP 109153 / LMG 22923 / VCD115)).